Here is a 103-residue protein sequence, read N- to C-terminus: Small ubiquitin-related modifier 2 (103 aa).

In terms of domain architecture, Ubiquitin-like spans 15–92; sequence AHINLKVKGQ…IDAMLHQTGG (78 aa). Glycine 92 participates in a covalent cross-link: Glycyl lysine isopeptide (Gly-Lys) (interchain with K-? in acceptor proteins).

It belongs to the ubiquitin family. SUMO subfamily. Interacts with SAE2, SCE1, SIZ1 and MMS21. Interacts with HSFA2. Covalently attached to ABI5, FLD, GTE3, HSFA2 and ICE1.

Its subcellular location is the nucleus. The protein localises to the cytoplasm. In terms of biological role, ubiquitin-like protein which can be covalently attached to target lysines as a monomer. Does not seem to be involved in protein degradation and may function as an antagonist of ubiquitin in the degradation process. Required for the massive protein sumoylation in the nucleus induced by heat shock and controlled by SIZ1. This chain is Small ubiquitin-related modifier 2, found in Arabidopsis thaliana (Mouse-ear cress).